The primary structure comprises 127 residues: Large ribosomal subunit protein bL12 (127 aa).

It belongs to the bacterial ribosomal protein bL12 family. Homodimer. Part of the ribosomal stalk of the 50S ribosomal subunit. Forms a multimeric L10(L12)X complex, where L10 forms an elongated spine to which 2 to 4 L12 dimers bind in a sequential fashion. Binds GTP-bound translation factors.

Functionally, forms part of the ribosomal stalk which helps the ribosome interact with GTP-bound translation factors. Is thus essential for accurate translation. The protein is Large ribosomal subunit protein bL12 of Streptomyces coelicolor (strain ATCC BAA-471 / A3(2) / M145).